The following is a 287-amino-acid chain: MSFRDKLDVYMRLARMDRPIGTLLLLWPCLMALTFAAGGLPDLKVFIIFVIGVVVMRACGCIINDYADRDLDSHVERTKARPLASGEISSKEALLLFGVMGLFAFSLVLMLNPLVVQLSVVGIILTIIYPFTKRYTNMPQMFLGTVWSWSIPMAYAAQTGTVPIEAWWLFAANWCWTVAYDTMYAMVDRDDDLKVGIKSTAILFGRYDRQIIAAFQLAALSCFIIAGMLAGRGEIYGLGILAFIGFAVYQQKLIYGRERGPCFTAFLNNNWAGMVLYIALTLDYLIL.

5 helical membrane passes run 35–55, 96–116, 211–231, 235–255, and 262–282; these read FAAG…GVVV, LFGV…PLVV, IIAA…MLAG, IYGL…KLIY, and CFTA…ALTL.

Belongs to the UbiA prenyltransferase family. The cofactor is Mg(2+).

It is found in the cell inner membrane. It carries out the reaction all-trans-octaprenyl diphosphate + 4-hydroxybenzoate = 4-hydroxy-3-(all-trans-octaprenyl)benzoate + diphosphate. It participates in cofactor biosynthesis; ubiquinone biosynthesis. Its function is as follows. Catalyzes the prenylation of para-hydroxybenzoate (PHB) with an all-trans polyprenyl group. Mediates the second step in the final reaction sequence of ubiquinone-8 (UQ-8) biosynthesis, which is the condensation of the polyisoprenoid side chain with PHB, generating the first membrane-bound Q intermediate 3-octaprenyl-4-hydroxybenzoate. The polypeptide is 4-hydroxybenzoate octaprenyltransferase (Shewanella halifaxensis (strain HAW-EB4)).